Reading from the N-terminus, the 577-residue chain is Arginine--tRNA ligase (577 aa).

Positions 122 to 132 (PNVAKEMHVGH) match the 'HIGH' region motif.

This sequence belongs to the class-I aminoacyl-tRNA synthetase family. As to quaternary structure, monomer.

The protein localises to the cytoplasm. The catalysed reaction is tRNA(Arg) + L-arginine + ATP = L-arginyl-tRNA(Arg) + AMP + diphosphate. The chain is Arginine--tRNA ligase from Edwardsiella ictaluri (strain 93-146).